The primary structure comprises 489 residues: Protein LMBR1L (489 aa).

Residues 1-21 (MEAPDYEVLSVREQLFHERIR) lie on the Extracellular side of the membrane. Positions 1 to 59 (MEAPDYEVLSVREQLFHERIRECIISTLLFATLYILCHIFLTRFKKPAEFTTVDDEDAT) are interaction with LGB. The segment at 1–76 (MEAPDYEVLS…LCTFTLAIAL (76 aa)) is LCN1-binding. Residues 22–42 (ECIISTLLFATLYILCHIFLT) traverse the membrane as a helical segment. Topologically, residues 43–66 (RFKKPAEFTTVDDEDATVNKIALE) are cytoplasmic. Residues 67–87 (LCTFTLAIALGAVLLLPFSII) traverse the membrane as a helical segment. Over 88 to 114 (SNEVLLSLPRNYYIQWLNGSLIHGLWN) the chain is Extracellular. The chain crosses the membrane as a helical span at residues 115–135 (LVFLFSNLSLIFLMPFAYFFT). Residues 136 to 154 (ESEGFAGSRKGVLGRVYET) are Cytoplasmic-facing. The chain crosses the membrane as a helical span at residues 155-175 (VVMLMLLTLLVLGMVWVASAI). Topologically, residues 176–196 (VDKNKANRESLYDFWEYYLPY) are extracellular. The helical transmembrane segment at 197–217 (LYSCISFLGVLLLLVCTPLGL) threads the bilayer. Residues 218-305 (ARMFSVTGKL…NLGYPLAMLC (88 aa)) lie on the Cytoplasmic side of the membrane. A helical transmembrane segment spans residues 306-326 (LLVLTGLSVLIVAIHILELLI). Residues 327–350 (DEAAMPRGMQGTSLGQVSFSKLGS) lie on the Extracellular side of the membrane. Residues 351 to 371 (FGAVIQVVLIFYLMVSSVVGF) traverse the membrane as a helical segment. At 372–388 (YSSPLFRSLRPRWHDTA) the chain is on the cytoplasmic side. Residues 389–409 (MTQIIGNCVCLLVLSSALPVF) form a helical membrane-spanning segment. The Extracellular portion of the chain corresponds to 410-431 (SRTLGLTRFDLLGDFGRFNWLG). A helical membrane pass occupies residues 432 to 452 (NFYIVFLYNAAFAGLTTLCLV). The Cytoplasmic segment spans residues 453-489 (KTFTAAVRAELIRAFGLDRLPLPVSGFPQASRKTQHQ).

Belongs to the LIMR family. Dimer. Can also form higher oligomers. Interacts with LCN1; this interaction mediates the endocytosis of LCN1. Interacts with UBAC2, FAF2, VCP, AMFR, ZNRF3, CTNNB1, LRP6, GSK3A and GSK3B. Interacts with DVL2 and RNF43. Interaction with SCGB1A1 has been observed in PubMed:16423471, but not in PubMed:23964685. Interaction with LGB which mediates the endocytosis of LGB has been observed in PubMed:17991420, but not in PubMed:23964685. As to expression, expressed in testis, pituitary gland, adrenal gland, trachea, placenta, thymus, cerebellum, stomach, mammary gland, spinal cord. A weaker expression is detected in colon, pancreas, and prostate.

It localises to the cell membrane. Its subcellular location is the endoplasmic reticulum membrane. Plays an essential role in lymphocyte development by negatively regulating the canonical Wnt signaling pathway. In association with UBAC2 and E3 ubiquitin-protein ligase AMFR, promotes the ubiquitin-mediated degradation of CTNNB1 and Wnt receptors FZD6 and LRP6. LMBR1L stabilizes the beta-catenin destruction complex that is required for regulating CTNNB1 levels. Acts as a LCN1 receptor and can mediate its endocytosis. The chain is Protein LMBR1L (LMBR1L) from Homo sapiens (Human).